The primary structure comprises 74 residues: Protein DELETION OF SUV3 SUPPRESSOR 1(I) (74 aa).

The interval Glu-35–Lys-74 is disordered. Residues Trp-46–Asp-57 are compositionally biased toward acidic residues. Residues Asp-58–Lys-74 are compositionally biased toward basic and acidic residues.

It belongs to the DSS1/SEM1 family. Part of the 26S proteasome. Interacts with BRCA2A and BRCA2B. Interacts with UCH1 and UCH2. Can form a tripartite complex with both RAD51 and BRCA2B or both DMC1 and BRCA2B.

Its function is as follows. Subunit of the 26S proteasome which plays a role in ubiquitin-dependent proteolysis. In Arabidopsis thaliana (Mouse-ear cress), this protein is Protein DELETION OF SUV3 SUPPRESSOR 1(I).